The primary structure comprises 1979 residues: Repetitive organellar protein (1979 aa).

The segment covering M1–K12 has biased composition (basic residues). Disordered stretches follow at residues M1 to Y42 and T54 to S116. 2 stretches are compositionally biased toward basic and acidic residues: residues E13–F24 and N31–Y42. Low complexity predominate over residues E68 to N114. Coiled coils occupy residues D127–E366, L412–L666, L693–Q876, K992–I1094, V1126–K1307, and I1398–Q1467.

It is found in the host cell membrane. This is Repetitive organellar protein from Plasmodium falciparum (isolate 3D7).